Consider the following 42-residue polypeptide: EIRLPEPFRFPSPTVPKPIDIDPILPHPWSPRQTYPIIARRS.

In terms of tissue distribution, hemolymph.

Its subcellular location is the secreted. Its function is as follows. Antimicrobial protein. Has antibacterial activity against the Gram-positive bacterium M.luteus (MIC=8.6 uM). Lacks antibacterial activity against the Gram-positive bacteria B.circulans, L.monocytogenes, S.aureus, and S.lutea, and the Gram-negative bacteria E.coli D31, E.coli ATCC 25922, and S.typhimurium. Lacks antifungal activity against S.cerevisiae, P.pastoris, Z.marxianus, C.albicans, C.fructus, C.wickerhamii, A.niger, F.oxysporum, and T.harizianum. This is Proline-rich antimicrobial peptide 2 from Galleria mellonella (Greater wax moth).